Reading from the N-terminus, the 387-residue chain is Probable G-protein coupled receptor 173 (387 aa).

The Extracellular segment spans residues 1-40 (MANGNASSDGPGNPLAAVVSTTGGVMGGAPSSAVSTYVKL). Asn5 carries an N-linked (GlcNAc...) asparagine glycan. A helical membrane pass occupies residues 41-61 (VLLGLIICISLVGNLVVSLLV). Topologically, residues 62-87 (LRDRALHKAPYYFLLDLCLADTIRSA) are cytoplasmic. Residues 88–108 (VCFPFVLVSIKNGSAWTYSVL) form a helical membrane-spanning segment. The Extracellular segment spans residues 109–111 (SCK). An intrachain disulfide couples Cys110 to Cys188. Residues 112–132 (VVAFMAVLFCFHAAFMLFCIS) traverse the membrane as a helical segment. The Cytoplasmic portion of the chain corresponds to 133–153 (VTRYMAIAHHRFYSKRMTFWT). The helical transmembrane segment at 154 to 174 (CVAVVCMVWTLSVAMAFPPVF) threads the bilayer. At 175–202 (DVGTYKFIREEDQCIFEHRYFKANDTLG) the chain is on the extracellular side. Asn198 carries an N-linked (GlcNAc...) asparagine glycan. Residues 203-223 (FMLMLAVLILATHVVYMKLLL) form a helical membrane-spanning segment. Residues 224 to 301 (FEYKHRKMKP…FKAEKQLGRM (78 aa)) lie on the Cytoplasmic side of the membrane. The helical transmembrane segment at 302–322 (FYVITLFFLVLWSPYIVACYW) threads the bilayer. Residues 323 to 335 (RVFVKACTIPHRY) lie on the Extracellular side of the membrane. A helical transmembrane segment spans residues 336–356 (LSTTVWMSFAQAGVNPIICFF). Residues 357–387 (LNKDLKKGLLAHLPPCCRTPPQLPREPYCVM) lie on the Cytoplasmic side of the membrane.

This sequence belongs to the G-protein coupled receptor 1 family.

Its subcellular location is the cell membrane. Functionally, is a receptor for the SMIM20 derived peptides Phoenixin-14 and Phoenixin-20. It mediates the Phoenixin-14 and Phoenixin-20 augmentation of gonadotropin-releasing hormone (GNRH) signaling in the hypothalamus and pituitary gland. In the ovary, it mediates the effects of Phoenixin-14 and Phoenixin-20 induced granulosa cell proliferation during follicular growth. The protein is Probable G-protein coupled receptor 173 (gpr173) of Danio rerio (Zebrafish).